The sequence spans 809 residues: Sucrose synthase 4 (809 aa).

Residues 275 to 753 form a GT-B glycosyltransferase region; the sequence is MIFNVVVVSP…GLQRIYEKYT (479 aa).

The protein belongs to the glycosyltransferase 1 family. Plant sucrose synthase subfamily. In terms of tissue distribution, predominantly expressed in the leaf tissues and in caryopses.

It catalyses the reaction an NDP-alpha-D-glucose + D-fructose = a ribonucleoside 5'-diphosphate + sucrose + H(+). Its function is as follows. Sucrose-cleaving enzyme that provides UDP-glucose and fructose for various metabolic pathways. The protein is Sucrose synthase 4 (SUS4) of Oryza sativa subsp. japonica (Rice).